Here is a 423-residue protein sequence, read N- to C-terminus: MAICQFFLQGRCRFGDRCWNEHPGARGAGGGRQQPQQQPSGNNRRGWNTTSQRYSNVIQPSSFSKSTPWGGSRDQEKPYFSSFDSGASTNRKEGFGLSENPFASLSPDEQKDEKKLLEGIVKDMEVWESSGQWMFSVYSPVKKKPNISGFTDISPEELRLEYHNFLTSNNLQSYLNSVQRLINQWRNRVNELKSLNISTKVALLSDVKDGVNQAAPAFGFGSSQAATFMSPGFPVNNSSSDNAQNFSFKTNSGFAAASSGSPAGFGSSPAFGAAASTSSGISTSAPAFGFGKPEVTSAASFSFKSPAASSFGSPGFSGLPASLATGPVRAPVAPAFGGGSSVAGFGSPGSHSHTAFSKPSSDTFGNSSISTSLSASSSIIATDNVLFTPRDKLTVEELEQFQSKKFTLGKIPLKPPPLELLNV.

Residues 1–25 form a C3H1-type zinc finger; that stretch reads MAICQFFLQGRCRFGDRCWNEHPGA. Residues 14–15 form an FG 1 repeat; the sequence is FG. Positions 24 to 85 are disordered; that stretch reads GARGAGGGRQ…EKPYFSSFDS (62 aa). The segment covering 40–69 has biased composition (polar residues); it reads SGNNRRGWNTTSQRYSNVIQPSSFSKSTPW. The interaction with HIV-1 Vpr stretch occupies residues 94–170; it reads GFGLSENPFA…EYHNFLTSNN (77 aa). An FG 2 repeat occupies 95-96; that stretch reads FG. Ser106 is subject to Phosphoserine. 10 FG repeats span residues 218–219, 220–221, 265–266, 271–272, 288–289, 290–291, 311–312, 336–337, 345–346, and 364–365; these read FG. The segment at 365-423 is interaction with GLE1; the sequence is GNSSISTSLSASSSIIATDNVLFTPRDKLTVEELEQFQSKKFTLGKIPLKPPPLELLNV.

As to quaternary structure, probable component of the nuclear pore complex (NPC). Interacts with nuclear export protein NXF1. Interacts with GLE1. Able to form a heterotrimer with NUP155 and GLE1 in vitro. Interacts with XPO1. (Microbial infection) Interacts with the HIV-1 virus proteins Rev and Vpr. The interaction with HIV-1 Rev, a protein that mediates nuclear export of unspliced viral RNAs, suggests that its function may be bypassed by the HIV-1 virus. O-glycosylated. As to expression, ubiquitously expressed.

The protein localises to the nucleus. It is found in the nuclear pore complex. Its subcellular location is the nucleus membrane. Required for the export of mRNAs containing poly(A) tails from the nucleus into the cytoplasm. In terms of biological role, (Microbial infection) In case of infection by HIV-1, it may participate in the docking of viral Vpr at the nuclear envelope. The polypeptide is Nucleoporin NUP42 (Homo sapiens (Human)).